We begin with the raw amino-acid sequence, 246 residues long: Ribonuclease 3 (246 aa).

An RNase III domain is found at Leu-10 to Gly-135. Position 50 (Glu-50) interacts with Mg(2+). Asp-54 is an active-site residue. Asp-121 and Glu-124 together coordinate Mg(2+). Glu-124 is an active-site residue. The 70-residue stretch at Asp-161 to Ala-230 folds into the DRBM domain.

This sequence belongs to the ribonuclease III family. As to quaternary structure, homodimer. Mg(2+) is required as a cofactor.

It is found in the cytoplasm. It carries out the reaction Endonucleolytic cleavage to 5'-phosphomonoester.. Its function is as follows. Digests double-stranded RNA. Involved in the processing of primary rRNA transcript to yield the immediate precursors to the large and small rRNAs (23S and 16S). Processes some mRNAs, and tRNAs when they are encoded in the rRNA operon. Processes pre-crRNA and tracrRNA of type II CRISPR loci if present in the organism. The sequence is that of Ribonuclease 3 from Mycoplasma mobile (strain ATCC 43663 / 163K / NCTC 11711) (Mesomycoplasma mobile).